Reading from the N-terminus, the 953-residue chain is Protein translocase subunit SecA 1 (953 aa).

ATP contacts are provided by residues Gln-83, 101–105, and Asp-490; that span reads GEGKT. The segment covering 854 to 867 has biased composition (low complexity); the sequence is AAAAAAKASDSAAK. The disordered stretch occupies residues 854 to 953; the sequence is AAAAAAKASD…DRPAKSHRKG (100 aa). The segment covering 929–947 has biased composition (basic and acidic residues); the sequence is SRRERREAARKQAKADRPA.

The protein belongs to the SecA family. Monomer and homodimer. Part of the essential Sec protein translocation apparatus which comprises SecA, SecYEG and auxiliary proteins SecDF. Other proteins may also be involved.

It is found in the cell membrane. It localises to the cytoplasm. The enzyme catalyses ATP + H2O + cellular proteinSide 1 = ADP + phosphate + cellular proteinSide 2.. In terms of biological role, part of the Sec protein translocase complex. Interacts with the SecYEG preprotein conducting channel. Has a central role in coupling the hydrolysis of ATP to the transfer of proteins into and across the cell membrane, serving as an ATP-driven molecular motor driving the stepwise translocation of polypeptide chains across the membrane. The sequence is that of Protein translocase subunit SecA 1 from Mycolicibacterium smegmatis (strain ATCC 700084 / mc(2)155) (Mycobacterium smegmatis).